We begin with the raw amino-acid sequence, 284 residues long: Esterase alnB (284 aa).

Active-site charge relay system residues include Ser-93, Asp-226, and His-255.

It belongs to the LovG family.

It participates in polyketide biosynthesis. Its function is as follows. Esterase; part of the gene cluster that mediates the biosynthesis of asperlin, a polyketide showing anti-inflammatory, antitumor and antibiotic activities. The first step of the asperlin biosynthesis is the production of the intermediate 2,4,6-octatrienoic acid by the highly redusing polyketide synthase alnA with cleavage of the PKS product by the esterase alnB. 2,4,6-octatrienoic acid is further converted to asperlin via several steps involving the remaining enzymes from the cluster. The chain is Esterase alnB from Emericella nidulans (strain FGSC A4 / ATCC 38163 / CBS 112.46 / NRRL 194 / M139) (Aspergillus nidulans).